A 224-amino-acid polypeptide reads, in one-letter code: Urease accessory protein UreG (224 aa).

Residues 1 to 20 (MATHSHPHSHTVPARPRRVR) show a composition bias toward basic residues. The interval 1–25 (MATHSHPHSHTVPARPRRVRKPGEP) is disordered. 32–39 (GPVGSGKT) is a GTP binding site.

It belongs to the SIMIBI class G3E GTPase family. UreG subfamily. As to quaternary structure, homodimer. UreD, UreF and UreG form a complex that acts as a GTP-hydrolysis-dependent molecular chaperone, activating the urease apoprotein by helping to assemble the nickel containing metallocenter of UreC. The UreE protein probably delivers the nickel.

The protein localises to the cytoplasm. Its function is as follows. Facilitates the functional incorporation of the urease nickel metallocenter. This process requires GTP hydrolysis, probably effectuated by UreG. The sequence is that of Urease accessory protein UreG from Mycobacterium bovis (strain ATCC BAA-935 / AF2122/97).